Consider the following 473-residue polypeptide: NAC domain-containing protein 68 (473 aa).

The 151-residue stretch at 4–154 (GLIGYRFSPT…KYVVCQVKYK (151 aa)) folds into the NAC domain. Residues 108–160 (IGIKKTLVYHEGKSPHGVRTPWVMHEYHITCLPHHKRKYVVCQVKYKGEAAEI) mediate DNA binding. Residues 326 to 380 (DHMPRKPVTGTIDYSSDSGSDAGSISTTSYQGTSSPNISVGSSSRHLSSCSSTDS) form a disordered region. Low complexity-rich tracts occupy residues 340 to 354 (SSDSGSDAGSISTTS) and 364 to 379 (SVGSSSRHLSSCSSTD). Residues 446–468 (FIYLMKMIIGNIISVLLPVKRLI) form a helical membrane-spanning segment.

Its subcellular location is the membrane. It is found in the nucleus. Functionally, transcription activator activated by proteolytic cleavage through regulated intramembrane proteolysis (RIP) mediated by calpain or its functional homolog. Regulates cytokinin signaling during cell division. This is NAC domain-containing protein 68 (NAC68) from Arabidopsis thaliana (Mouse-ear cress).